A 415-amino-acid polypeptide reads, in one-letter code: Tyrosine--tRNA ligase (415 aa).

Tyr34 contributes to the L-tyrosine binding site. A 'HIGH' region motif is present at residues Pro39–Asn48. L-tyrosine contacts are provided by Tyr162 and Gln166. The 'KMSKS' region motif lies at Lys224–Ser228. Lys227 is a binding site for ATP. In terms of domain architecture, S4 RNA-binding spans Ile346–Asn413.

This sequence belongs to the class-I aminoacyl-tRNA synthetase family. TyrS type 1 subfamily. Homodimer.

Its subcellular location is the cytoplasm. The catalysed reaction is tRNA(Tyr) + L-tyrosine + ATP = L-tyrosyl-tRNA(Tyr) + AMP + diphosphate + H(+). Its function is as follows. Catalyzes the attachment of tyrosine to tRNA(Tyr) in a two-step reaction: tyrosine is first activated by ATP to form Tyr-AMP and then transferred to the acceptor end of tRNA(Tyr). The polypeptide is Tyrosine--tRNA ligase (Ureaplasma parvum serovar 3 (strain ATCC 27815 / 27 / NCTC 11736)).